A 261-amino-acid chain; its full sequence is tRNA U34 carboxymethyltransferase (261 aa).

Carboxy-S-adenosyl-L-methionine contacts are provided by residues K25, W39, K44, G63, 114–115, Y135, and R250; that span reads VE.

Belongs to the class I-like SAM-binding methyltransferase superfamily. CmoB family. As to quaternary structure, homotetramer.

The enzyme catalyses carboxy-S-adenosyl-L-methionine + 5-hydroxyuridine(34) in tRNA = 5-carboxymethoxyuridine(34) in tRNA + S-adenosyl-L-homocysteine + H(+). Functionally, catalyzes carboxymethyl transfer from carboxy-S-adenosyl-L-methionine (Cx-SAM) to 5-hydroxyuridine (ho5U) to form 5-carboxymethoxyuridine (cmo5U) at position 34 in tRNAs. This is tRNA U34 carboxymethyltransferase from Helicobacter pylori (strain J99 / ATCC 700824) (Campylobacter pylori J99).